The following is a 610-amino-acid chain: Membrane protein insertase YidC (610 aa).

The chain crosses the membrane as a helical span at residues 7–27 (FFITIALSILILALWQVFYLG). The tract at residues 36-82 (QARIEEQQRQAQQAAQNRQASSSTGDTPQMPANPDSIPGQGDTKAAG) is disordered. The span at 44-55 (RQAQQAAQNRQA) shows a compositional bias: low complexity. Transmembrane regions (helical) follow at residues 358–378 (FDLL…FYLI), 387–407 (NFGV…FPLA), 458–478 (WPVL…YVTI), 510–530 (TVPH…IMFL), and 546–566 (IFTW…AGLV).

This sequence belongs to the OXA1/ALB3/YidC family. Type 1 subfamily. Interacts with the Sec translocase complex via SecD. Specifically interacts with transmembrane segments of nascent integral membrane proteins during membrane integration.

The protein resides in the cell inner membrane. Functionally, required for the insertion and/or proper folding and/or complex formation of integral membrane proteins into the membrane. Involved in integration of membrane proteins that insert both dependently and independently of the Sec translocase complex, as well as at least some lipoproteins. Aids folding of multispanning membrane proteins. The chain is Membrane protein insertase YidC from Brucella melitensis biotype 1 (strain ATCC 23456 / CCUG 17765 / NCTC 10094 / 16M).